We begin with the raw amino-acid sequence, 329 residues long: Delta-aminolevulinic acid dehydratase (329 aa).

Positions 122, 124, 131, and 132 each coordinate Zn(2+). K199 acts as the Schiff-base intermediate with substrate in catalysis. The residue at position 199 (K199) is an N6-succinyllysine. R209 provides a ligand contact to 5-aminolevulinate. Position 215 is a phosphoserine (S215). R221 provides a ligand contact to 5-aminolevulinate. C223 lines the Zn(2+) pocket. Catalysis depends on K252, which acts as the Schiff-base intermediate with substrate. N6-succinyllysine is present on K252. Positions 279 and 318 each coordinate 5-aminolevulinate.

This sequence belongs to the ALAD family. Homooctamer; active form. Homohexamer; low activity form. Zn(2+) is required as a cofactor.

It is found in the cytoplasm. Its subcellular location is the cytosol. The catalysed reaction is 2 5-aminolevulinate = porphobilinogen + 2 H2O + H(+). The protein operates within porphyrin-containing compound metabolism; protoporphyrin-IX biosynthesis; coproporphyrinogen-III from 5-aminolevulinate: step 1/4. With respect to regulation, can alternate between a fully active homooctamer and a low-activity homohexamer. A bound magnesium ion may promote the assembly of the fully active homooctamer. The magnesium-binding site is absent in the low-activity homohexamer. Inhibited by compounds that favor the hexameric state. Inhibited by divalent lead ions. The lead ions partially displace the zinc cofactor. Catalyzes an early step in the biosynthesis of tetrapyrroles. Binds two molecules of 5-aminolevulinate per subunit, each at a distinct site, and catalyzes their condensation to form porphobilinogen. This is Delta-aminolevulinic acid dehydratase (ALAD) from Bos taurus (Bovine).